The following is an 806-amino-acid chain: Xylosyltransferase sqv-6 (806 aa).

The Cytoplasmic segment spans residues 1–11 (MLFNGTTKYRD). A helical; Signal-anchor for type II membrane protein membrane pass occupies residues 12–32 (YAIVISLFFLLNVYLLYNTAQ). The Lumenal portion of the chain corresponds to 33–806 (HTQVGNSKHI…GYDEDTQTLI (774 aa)). Cys-57 and Cys-85 are joined by a disulfide. Asn-89 and Asn-169 each carry an N-linked (GlcNAc...) asparagine glycan. Cystine bridges form between Cys-101/Cys-445, Cys-464/Cys-478, and Cys-466/Cys-476. The region spanning 109–205 (IDQRIGCFLD…FNAVEIFRTG (97 aa)) is the WSC domain. UDP-alpha-D-xylose-binding positions include Asp-264 and 293-295 (TIW). N-linked (GlcNAc...) asparagine glycosylation occurs at Asn-325. 398–399 (DW) serves as a coordination point for UDP-alpha-D-xylose. UDP-alpha-D-xylose-binding positions include Ser-479 and 505 to 506 (RK). 3 N-linked (GlcNAc...) asparagine glycosylation sites follow: Asn-614, Asn-655, and Asn-719. Cysteines 772 and 778 form a disulfide.

This sequence belongs to the glycosyltransferase 14 family. XylT subfamily. It depends on a divalent metal cation as a cofactor.

The protein localises to the endoplasmic reticulum membrane. It is found in the golgi apparatus membrane. It carries out the reaction UDP-alpha-D-xylose + L-seryl-[protein] = 3-O-(beta-D-xylosyl)-L-seryl-[protein] + UDP + H(+). It participates in glycan metabolism; chondroitin sulfate biosynthesis. Its pathway is glycan metabolism; heparan sulfate biosynthesis. Its function is as follows. Catalyzes the first step in biosynthesis of glycosaminoglycan. Transfers D-xylose from UDP-D-xylose to specific serine residues of the core protein. Required for vulval morphogenesis and zygotic cytokinesis, suggesting that glycosaminoglycans play a central role in vulval morphogenesis. The chain is Xylosyltransferase sqv-6 from Caenorhabditis elegans.